The following is a 171-amino-acid chain: Adenine phosphoribosyltransferase (171 aa).

Belongs to the purine/pyrimidine phosphoribosyltransferase family. Homodimer.

Its subcellular location is the cytoplasm. The catalysed reaction is AMP + diphosphate = 5-phospho-alpha-D-ribose 1-diphosphate + adenine. It functions in the pathway purine metabolism; AMP biosynthesis via salvage pathway; AMP from adenine: step 1/1. Catalyzes a salvage reaction resulting in the formation of AMP, that is energically less costly than de novo synthesis. This chain is Adenine phosphoribosyltransferase, found in Acetivibrio thermocellus (strain ATCC 27405 / DSM 1237 / JCM 9322 / NBRC 103400 / NCIMB 10682 / NRRL B-4536 / VPI 7372) (Clostridium thermocellum).